The sequence spans 699 residues: MHAIAPRLLLLFVLSGLPGTRGGSGVPGPINPPNSDVVFPGGSPVAQYCYAYPRLDDPGPLGSADAGRQDLPRRVVRHEPLGRSFLTGGLVLLAPPVRGFGAPNATYAARVTYYRLTRACRQPILLRQYGGCRGGEPPSPKTCGSYTYTYQGGGPPTRYALVNASLLVPIWDRAAETFEYQIELGGELHVGLLWVEVGGEGPGPTAPPQAARAEGGPCVPPVPAGRPWRSVPPVWYSAPNPGFRGLRFRERCLPPQTPAAPSDLPRVAFAPQSLLVGITGRTFIRMARPTEDVGVLPPHWAPGALDDGPYAPFPPRPRFRRALRTDPEGVDPDVRAPRTGRRLMALTEDTSSDSPTSAPEKTPLPVSATAMAPSVDPSAEPTAPATTTPPDEMATQAATVAVTPEETAVASPPATASVESSPLPAAAAATPGAGHTNTSSASAAKTPPTTPAPTTPPPTSTHATPRPTTPGPQTTPPGPATPGPVGASAAPTADSPLTASPPATAPGPSAANVSVAATTATPGTRGTARTPPTDPKTHPHGPADAPPGSPAPPPPEHRGGPEEFEGAGDGEPPEDDDSATGLAFRTPNPNKPPPARPGPIRPTLPPGILGPLAPNTPRPPAQAPAKDMPSGPTPQHIPLFWFLTASPALDILFIISTTIHTAAFVCLVALAAQLWRGRAGRRRYAHPSVRYVCLPPERD.

A signal peptide spans 1–22 (MHAIAPRLLLLFVLSGLPGTRG). At 23-650 (GSGVPGPINP…WFLTASPALD (628 aa)) the chain is on the virion surface side. Asn104 and Asn163 each carry an N-linked (GlcNAc...) asparagine; by host glycan. 2 disordered regions span residues 302 to 390 (PGAL…TTPP) and 403 to 632 (TPEE…PSGP). Basic and acidic residues predominate over residues 323 to 336 (LRTDPEGVDPDVRA). Over residues 348 to 359 (EDTSSDSPTSAP) the composition is skewed to polar residues. 2 stretches are compositionally biased toward low complexity: residues 376 to 390 (DPSA…TTPP) and 403 to 447 (TPEE…AKTP). N-linked (GlcNAc...) asparagine; by host glycosylation occurs at Asn437. Pro residues-rich tracts occupy residues 448–459 (PTTPAPTTPPPT) and 467–482 (PTTP…PATP). A compositionally biased stretch (low complexity) spans 483–531 (GPVGASAAPTADSPLTASPPATAPGPSAANVSVAATTATPGTRGTARTP). An N-linked (GlcNAc...) asparagine; by host glycan is attached at Asn512. Over residues 544–554 (DAPPGSPAPPP) the composition is skewed to pro residues. Residues 562-578 (EEFEGAGDGEPPEDDDS) are compositionally biased toward acidic residues. Pro residues predominate over residues 589–605 (PNKPPPARPGPIRPTLP). The helical transmembrane segment at 651-671 (ILFIISTTIHTAAFVCLVALA) threads the bilayer. The Intravirion portion of the chain corresponds to 672–699 (AQLWRGRAGRRRYAHPSVRYVCLPPERD).

Belongs to the alphaherpesvirinae glycoprotein G family.

Its subcellular location is the virion membrane. Functionally, chemokine-binding protein that inhibits neutrophils' chemotaxis. This is Envelope glycoprotein G (gG) from Human herpesvirus 2 (strain HG52) (HHV-2).